A 282-amino-acid chain; its full sequence is Sirohydrochlorin cobaltochelatase CbiKC (282 aa).

The active-site Proton acceptor is His166. Positions 166 and 228 each coordinate Co(2+).

Belongs to the CbiK family.

The protein localises to the cytoplasm. The enzyme catalyses Co-sirohydrochlorin + 2 H(+) = sirohydrochlorin + Co(2+). It carries out the reaction siroheme + 2 H(+) = sirohydrochlorin + Fe(2+). Its pathway is cofactor biosynthesis; adenosylcobalamin biosynthesis; cob(II)yrinate a,c-diamide from sirohydrochlorin (anaerobic route): step 1/10. It functions in the pathway porphyrin-containing compound metabolism; siroheme biosynthesis; siroheme from sirohydrochlorin: step 1/1. Its function is as follows. Catalyzes the insertion of Co(2+) into sirohydrochlorin as part of the anaerobic pathway to cobalamin biosynthesis. To a lesser extent, is also able to insert Fe(2+) into sirohydrochlorin, yielding siroheme. The protein is Sirohydrochlorin cobaltochelatase CbiKC (cbiKc) of Nitratidesulfovibrio vulgaris (strain ATCC 29579 / DSM 644 / CCUG 34227 / NCIMB 8303 / VKM B-1760 / Hildenborough) (Desulfovibrio vulgaris).